A 405-amino-acid polypeptide reads, in one-letter code: Argininosuccinate synthase (405 aa).

11-19 (AYSGGLDTS) lines the ATP pocket. Tyr-90 provides a ligand contact to L-citrulline. Gly-119 lines the ATP pocket. Residues Thr-121, Asn-125, and Asp-126 each contribute to the L-aspartate site. Residue Asn-125 participates in L-citrulline binding. 5 residues coordinate L-citrulline: Arg-129, Ser-178, Ser-187, Glu-263, and Tyr-275.

Belongs to the argininosuccinate synthase family. Type 1 subfamily. Homotetramer.

The protein localises to the cytoplasm. The catalysed reaction is L-citrulline + L-aspartate + ATP = 2-(N(omega)-L-arginino)succinate + AMP + diphosphate + H(+). The protein operates within amino-acid biosynthesis; L-arginine biosynthesis; L-arginine from L-ornithine and carbamoyl phosphate: step 2/3. The protein is Argininosuccinate synthase of Legionella pneumophila (strain Paris).